Here is a 518-residue protein sequence, read N- to C-terminus: Zinc finger protein 449 (518 aa).

The SCAN box domain maps to 30–112 (RQRFRQFQYR…SLIEDLQREL (83 aa)). A compositionally biased stretch (polar residues) spans 292 to 304 (NPTLGETPENSNL). Positions 292–325 (NPTLGETPENSNLEEPLNPKPHKKKSPGEKPHRC) are disordered. C2H2-type zinc fingers lie at residues 323-345 (HRCP…QRIH), 351-373 (HKCP…QRLH), 379-401 (YECT…QRTH), 407-429 (YKCL…LKTH), 435-457 (HRCH…QRTH), 463-485 (FKCN…LRIH), and 491-513 (YKCT…QVTH).

This sequence belongs to the krueppel C2H2-type zinc-finger protein family.

It is found in the nucleus. May be involved in transcriptional regulation. In Homo sapiens (Human), this protein is Zinc finger protein 449 (ZNF449).